We begin with the raw amino-acid sequence, 322 residues long: N-acetyl-gamma-glutamyl-phosphate reductase (322 aa).

Residue Cys-132 is part of the active site.

This sequence belongs to the NAGSA dehydrogenase family. Type 1 subfamily.

It localises to the cytoplasm. It carries out the reaction N-acetyl-L-glutamate 5-semialdehyde + phosphate + NADP(+) = N-acetyl-L-glutamyl 5-phosphate + NADPH + H(+). It functions in the pathway amino-acid biosynthesis; L-arginine biosynthesis; N(2)-acetyl-L-ornithine from L-glutamate: step 3/4. In terms of biological role, catalyzes the NADPH-dependent reduction of N-acetyl-5-glutamyl phosphate to yield N-acetyl-L-glutamate 5-semialdehyde. This chain is N-acetyl-gamma-glutamyl-phosphate reductase, found in Bacteroides fragilis (strain YCH46).